The following is a 499-amino-acid chain: Bifunctional purine biosynthesis protein PurH (499 aa).

An MGS-like domain is found at 1–144; sequence MIKRALISVF…KNFKDVVVLT (144 aa).

The protein belongs to the PurH family.

It catalyses the reaction (6R)-10-formyltetrahydrofolate + 5-amino-1-(5-phospho-beta-D-ribosyl)imidazole-4-carboxamide = 5-formamido-1-(5-phospho-D-ribosyl)imidazole-4-carboxamide + (6S)-5,6,7,8-tetrahydrofolate. It carries out the reaction IMP + H2O = 5-formamido-1-(5-phospho-D-ribosyl)imidazole-4-carboxamide. It functions in the pathway purine metabolism; IMP biosynthesis via de novo pathway; 5-formamido-1-(5-phospho-D-ribosyl)imidazole-4-carboxamide from 5-amino-1-(5-phospho-D-ribosyl)imidazole-4-carboxamide (10-formyl THF route): step 1/1. It participates in purine metabolism; IMP biosynthesis via de novo pathway; IMP from 5-formamido-1-(5-phospho-D-ribosyl)imidazole-4-carboxamide: step 1/1. The sequence is that of Bifunctional purine biosynthesis protein PurH from Clostridium botulinum (strain Hall / ATCC 3502 / NCTC 13319 / Type A).